The sequence spans 111 residues: Class I hydrophobin 2 (111 aa).

The N-terminal stretch at 1-21 (MFSRVMFCTFLILPLLAAATA) is a signal peptide. 4 cysteine pairs are disulfide-bonded: Cys30–Cys90, Cys37–Cys84, Cys38–Cys71, and Cys91–Cys104.

The protein belongs to the fungal hydrophobin family. Self-assembles to form functional amyloid fibrils called rodlets. Self-assembly into fibrillar rodlets occurs spontaneously at hydrophobic:hydrophilic interfaces and the rodlets further associate laterally to form amphipathic monolayers. Behavior depends on environmental conditions: (1) when the pH increases or in the presence of Ca(2+) ions, an assembled state, beta-sheet rich, is formed; (2) when the solvent polarity increases, the vhm2 shows an increased tendency to reach hydrophobic/hydrophilic interfaces, with no detectable conformational change; and (3) at high temperature, a reversible conformational change and reversible aggregation occur. The physical and chemical properties, both in solution and as a biofilm, are affected by polysaccharides that act as hydrophilic stabilizer.

It localises to the secreted. Its subcellular location is the cell wall. Aerial growth, conidiation, and dispersal of filamentous fungi in the environment rely upon a capability of their secreting small amphipathic proteins called hydrophobins (HPBs) with low sequence identity. Class I can self-assemble into an outermost layer of rodlet bundles on aerial cell surfaces, conferring cellular hydrophobicity that supports fungal growth, development and dispersal; whereas Class II form highly ordered films at water-air interfaces through intermolecular interactions but contribute nothing to the rodlet structure. Vmh2 is a class I hydrophobin involved in biofilm formation and is essential for the maintenance of the surface hydrophobicity of the mycelium. Seems not to be involved in hyphal resistance against environmental stress. This chain is Class I hydrophobin 2, found in Pleurotus ostreatus (strain PC15) (Oyster mushroom).